The sequence spans 906 residues: Protein translocase subunit SecA (906 aa).

Residues Q87, G105–T109, and D512 each bind ATP. The tract at residues R879–S906 is disordered. C890, C892, C901, and H902 together coordinate Zn(2+).

The protein belongs to the SecA family. As to quaternary structure, monomer and homodimer. Part of the essential Sec protein translocation apparatus which comprises SecA, SecYEG and auxiliary proteins SecDF-YajC and YidC. Zn(2+) serves as cofactor.

The protein localises to the cell inner membrane. The protein resides in the cytoplasm. It carries out the reaction ATP + H2O + cellular proteinSide 1 = ADP + phosphate + cellular proteinSide 2.. Functionally, part of the Sec protein translocase complex. Interacts with the SecYEG preprotein conducting channel. Has a central role in coupling the hydrolysis of ATP to the transfer of proteins into and across the cell membrane, serving both as a receptor for the preprotein-SecB complex and as an ATP-driven molecular motor driving the stepwise translocation of polypeptide chains across the membrane. This Shewanella frigidimarina (strain NCIMB 400) protein is Protein translocase subunit SecA.